The chain runs to 295 residues: Putative nudix hydrolase 7 (295 aa).

In terms of domain architecture, Nudix hydrolase spans 9-182; that stretch reads SWRSAASIIL…KYALPPPQVY (174 aa). Residues 52-73 carry the Nudix box motif; it reads TDAKLGDEFRIAAVRELFEESG. Positions 67 and 71 each coordinate Mg(2+).

The protein belongs to the Nudix hydrolase family. Mg(2+) serves as cofactor. The cofactor is Mn(2+).

Functionally, probably mediates the hydrolysis of some nucleoside diphosphate derivatives. This chain is Putative nudix hydrolase 7 (ndx-7), found in Caenorhabditis elegans.